A 141-amino-acid polypeptide reads, in one-letter code: Large ribosomal subunit protein uL14m (141 aa).

The transit peptide at 1 to 19 (MALSLSGLILPKLMQQRAF) directs the protein to the mitochondrion.

The protein belongs to the universal ribosomal protein uL14 family. In terms of assembly, component of the mitochondrial ribosome large subunit (39S) which comprises a 16S rRNA and about 50 distinct proteins. Interacts with MALSU1.

The protein localises to the mitochondrion. Functionally, may form part of 2 intersubunit bridges in the assembled ribosome. Upon binding to MALSU1, intersubunit bridge formation is blocked, preventing ribosome formation and repressing translation. The sequence is that of Large ribosomal subunit protein uL14m (mrpl14) from Danio rerio (Zebrafish).